We begin with the raw amino-acid sequence, 740 residues long: E3 ubiquitin-protein ligase DTX3L (740 aa).

N-acetylalanine is present on Ala2. Ser9 bears the Phosphoserine mark. Disordered regions lie at residues 96 to 119, 195 to 231, and 524 to 551; these read NTRPQISSLTQSQAETPSGDMHQH, SEQKQQFSPSMTERKPLSQQERDSCISPSEPETKAEQ, and HETPMDIDSDDSKAASPPLKGSVSSEAS. Composition is skewed to polar residues over residues 98-111 and 195-205; these read RPQISSLTQSQAET and SEQKQQFSPSM. Ser202 bears the Phosphoserine mark. Positions 206-218 are enriched in basic and acidic residues; sequence TERKPLSQQERDS. Phosphoserine occurs at positions 221, 532, and 539. Residues 561–600 form an RING-type zinc finger; it reads CVICMDTISNKKVLPKCKHEFCAPCINKAMSYKPICPTCQ.

It belongs to the Deltex family. As to quaternary structure, homodimer and heterodimer. Can heterodimerize with DTX1, enhancing its ubiquitin ligase activity in vitro. Interacts (via N-terminus) with ADP ribosyltransferase PARP9/BAL1 (via PARP catalytic domain) forming a stable complex; the interaction is required to activate PARP9 but is dispensable for DTX3L catalytic activity. Forms a complex with STAT1 and PARP9 independently of IFNB1 or IFNG-mediated STAT1 'Tyr-701' phosphorylation. Found in a complex with PARP9, STAT1 and H2BC9. Found in a complex with E3 ligase ITCH and ESCRT-0 components HGS and STAM. Interacts (via C-terminus) with ITCH; the interaction is increased upon CXCL12 stimulation and inhibits ITCH catalytic activity; the interaction is direct. Interacts with HGS and STAM; the interaction brings together HGS and STAM and promotes their recruitment to early endosomes. In terms of assembly, (Microbial infection) Interacts with encephalomyocarditis virus (EMCV) C3 protease; the interaction results in C3 protease 'Lys-48'-linked ubiquitination. (Microbial infection) Interacts with human rhinovirus (HRV) C3 protease; the interaction results in C3 protease 'Lys-48'-linked ubiquitination. Autoubiquitinated.

The protein localises to the cytoplasm. Its subcellular location is the nucleus. It is found in the early endosome membrane. The protein resides in the lysosome membrane. The enzyme catalyses S-ubiquitinyl-[E2 ubiquitin-conjugating enzyme]-L-cysteine + [acceptor protein]-L-lysine = [E2 ubiquitin-conjugating enzyme]-L-cysteine + N(6)-ubiquitinyl-[acceptor protein]-L-lysine.. Its pathway is protein modification; protein ubiquitination. Its activity is regulated as follows. Binding to PARP9 enhances DTX3L catalytic activity. Its function is as follows. E3 ubiquitin-protein ligase which, in association with ADP-ribosyltransferase PARP9, plays a role in DNA damage repair and in interferon-mediated antiviral responses. Monoubiquitinates several histones, including histone H2A, H2B, H3 and H4. In response to DNA damage, mediates monoubiquitination of 'Lys-91' of histone H4 (H4K91ub1). The exact role of H4K91ub1 in DNA damage response is still unclear but it may function as a licensing signal for additional histone H4 post-translational modifications such as H4 'Lys-20' methylation (H4K20me). PARP1-dependent PARP9-DTX3L-mediated ubiquitination promotes the rapid and specific recruitment of 53BP1/TP53BP1, UIMC1/RAP80, and BRCA1 to DNA damage sites. By monoubiquitinating histone H2B H2BC9/H2BJ and thereby promoting chromatin remodeling, positively regulates STAT1-dependent interferon-stimulated gene transcription and thus STAT1-mediated control of viral replication. Independently of its catalytic activity, promotes the sorting of chemokine receptor CXCR4 from early endosome to lysosome following CXCL12 stimulation by reducing E3 ligase ITCH activity and thus ITCH-mediated ubiquitination of endosomal sorting complex required for transport ESCRT-0 components HGS and STAM. In addition, required for the recruitment of HGS and STAM to early endosomes. In association with PARP9, plays a role in antiviral responses by mediating 'Lys-48'-linked ubiquitination of encephalomyocarditis virus (EMCV) and human rhinovirus (HRV) C3 proteases and thus promoting their proteasomal-mediated degradation. This Homo sapiens (Human) protein is E3 ubiquitin-protein ligase DTX3L (DTX3L).